The following is a 268-amino-acid chain: Thiazole synthase (268 aa).

Residue Lys-108 is the Schiff-base intermediate with DXP of the active site. 1-deoxy-D-xylulose 5-phosphate is bound by residues Gly-169, Ala-195–Gly-196, and Asn-217–Ser-218. The segment at Arg-248–Asn-268 is disordered. Polar residues predominate over residues Ala-255 to Asn-268.

Belongs to the ThiG family. As to quaternary structure, homotetramer. Forms heterodimers with either ThiH or ThiS.

The protein localises to the cytoplasm. It catalyses the reaction [ThiS sulfur-carrier protein]-C-terminal-Gly-aminoethanethioate + 2-iminoacetate + 1-deoxy-D-xylulose 5-phosphate = [ThiS sulfur-carrier protein]-C-terminal Gly-Gly + 2-[(2R,5Z)-2-carboxy-4-methylthiazol-5(2H)-ylidene]ethyl phosphate + 2 H2O + H(+). Its pathway is cofactor biosynthesis; thiamine diphosphate biosynthesis. Its function is as follows. Catalyzes the rearrangement of 1-deoxy-D-xylulose 5-phosphate (DXP) to produce the thiazole phosphate moiety of thiamine. Sulfur is provided by the thiocarboxylate moiety of the carrier protein ThiS. In vitro, sulfur can be provided by H(2)S. This is Thiazole synthase from Prochlorococcus marinus (strain NATL2A).